The sequence spans 311 residues: 4-hydroxy-3-methylbut-2-enyl diphosphate reductase (311 aa).

A [4Fe-4S] cluster-binding site is contributed by cysteine 12. Histidine 41 and histidine 74 together coordinate (2E)-4-hydroxy-3-methylbut-2-enyl diphosphate. Dimethylallyl diphosphate-binding residues include histidine 41 and histidine 74. Positions 41 and 74 each coordinate isopentenyl diphosphate. Position 96 (cysteine 96) interacts with [4Fe-4S] cluster. Position 124 (histidine 124) interacts with (2E)-4-hydroxy-3-methylbut-2-enyl diphosphate. Position 124 (histidine 124) interacts with dimethylallyl diphosphate. Histidine 124 serves as a coordination point for isopentenyl diphosphate. Catalysis depends on glutamate 126, which acts as the Proton donor. Threonine 167 serves as a coordination point for (2E)-4-hydroxy-3-methylbut-2-enyl diphosphate. Residue cysteine 197 participates in [4Fe-4S] cluster binding. (2E)-4-hydroxy-3-methylbut-2-enyl diphosphate-binding residues include serine 225, serine 226, asparagine 227, and serine 269. 4 residues coordinate dimethylallyl diphosphate: serine 225, serine 226, asparagine 227, and serine 269. Serine 225, serine 226, asparagine 227, and serine 269 together coordinate isopentenyl diphosphate.

This sequence belongs to the IspH family. Requires [4Fe-4S] cluster as cofactor.

The enzyme catalyses isopentenyl diphosphate + 2 oxidized [2Fe-2S]-[ferredoxin] + H2O = (2E)-4-hydroxy-3-methylbut-2-enyl diphosphate + 2 reduced [2Fe-2S]-[ferredoxin] + 2 H(+). It carries out the reaction dimethylallyl diphosphate + 2 oxidized [2Fe-2S]-[ferredoxin] + H2O = (2E)-4-hydroxy-3-methylbut-2-enyl diphosphate + 2 reduced [2Fe-2S]-[ferredoxin] + 2 H(+). Its pathway is isoprenoid biosynthesis; dimethylallyl diphosphate biosynthesis; dimethylallyl diphosphate from (2E)-4-hydroxy-3-methylbutenyl diphosphate: step 1/1. It participates in isoprenoid biosynthesis; isopentenyl diphosphate biosynthesis via DXP pathway; isopentenyl diphosphate from 1-deoxy-D-xylulose 5-phosphate: step 6/6. In terms of biological role, catalyzes the conversion of 1-hydroxy-2-methyl-2-(E)-butenyl 4-diphosphate (HMBPP) into a mixture of isopentenyl diphosphate (IPP) and dimethylallyl diphosphate (DMAPP). Acts in the terminal step of the DOXP/MEP pathway for isoprenoid precursor biosynthesis. The chain is 4-hydroxy-3-methylbut-2-enyl diphosphate reductase from Aeromonas salmonicida (strain A449).